The chain runs to 564 residues: Proline--tRNA ligase (564 aa).

This sequence belongs to the class-II aminoacyl-tRNA synthetase family. ProS type 1 subfamily. In terms of assembly, homodimer.

The protein localises to the cytoplasm. It carries out the reaction tRNA(Pro) + L-proline + ATP = L-prolyl-tRNA(Pro) + AMP + diphosphate. In terms of biological role, catalyzes the attachment of proline to tRNA(Pro) in a two-step reaction: proline is first activated by ATP to form Pro-AMP and then transferred to the acceptor end of tRNA(Pro). As ProRS can inadvertently accommodate and process non-cognate amino acids such as alanine and cysteine, to avoid such errors it has two additional distinct editing activities against alanine. One activity is designated as 'pretransfer' editing and involves the tRNA(Pro)-independent hydrolysis of activated Ala-AMP. The other activity is designated 'posttransfer' editing and involves deacylation of mischarged Ala-tRNA(Pro). The misacylated Cys-tRNA(Pro) is not edited by ProRS. In Sulfurihydrogenibium sp. (strain YO3AOP1), this protein is Proline--tRNA ligase.